The following is a 675-amino-acid chain: G-protein coupled receptor moody (675 aa).

The Extracellular segment spans residues 1–44 (MSDETTGSLGDAFSPMDTPTTTIMPPPADVDESGFSHSLLTFAA). A helical membrane pass occupies residues 45–65 (VMTFLIMIVGICGNLLTVVAL). At 66-73 (LKCPKVRN) the chain is on the cytoplasmic side. Residues 74–94 (VAAAFIISLCIADLLFCALVL) form a helical membrane-spanning segment. Over 95-115 (PFQGLRFVQGTWRHGEVLCRL) the chain is Extracellular. A disulfide bridge connects residues cysteine 113 and cysteine 192. The chain crosses the membrane as a helical span at residues 116–136 (IPFIQYGNIGVSLLCIAMITI). Residues 137–156 (NRYVMITHYSLYNRIYKRHW) lie on the Cytoplasmic side of the membrane. Residues 157 to 177 (IAIMIAACWLFSYGMQLPTLL) traverse the membrane as a helical segment. At 178–206 (GAWGRFGYDARLQTCSIMSDRHGHSSKTT) the chain is on the extracellular side. A helical membrane pass occupies residues 207–227 (LFITAFVIPCLVIIACYAKIF). The Cytoplasmic portion of the chain corresponds to 228–327 (WVVHKSEQRL…AKRNEWRITK (100 aa)). The tract at residues 258–316 (TSMPSGDGANPSQVPAGCRVSSDSSSNYSTDVPDTTPGGAGGGAGVKQQPSRVKDQREV) is disordered. The span at 278–294 (SSDSSSNYSTDVPDTTP) shows a compositional bias: low complexity. A helical transmembrane segment spans residues 328-348 (MVLAIFLSFVICYLPITIVKV). Residues 349–359 (ADKDVEHPSLH) are Extracellular-facing. Residues 360 to 380 (IFSYIMLYLSACINPIIYVIM) form a helical membrane-spanning segment. Topologically, residues 381-675 (NKQYRKAYKT…LMDKKKFPKD (295 aa)) are cytoplasmic. Disordered regions lie at residues 475-568 (SKSS…GNGS) and 588-675 (LPPT…FPKD). Residues 536-551 (SSVISANPSSSPSPSS) show a composition bias toward low complexity. Residues 552 to 565 (SGGGIYRPGIGSMG) show a composition bias toward gly residues. Residues 666-675 (LMDKKKFPKD) show a composition bias toward basic and acidic residues.

The protein belongs to the G-protein coupled receptor 1 family.

It is found in the cell membrane. Its function is as follows. Required in glia to regulate the acute sensitivity to cocaine and to continuously maintain the proper blood-brain barrier (BBB) function. A moody-mediated signaling pathway functions in glia to regulate nervous system insulation and drug-related behaviors. The polypeptide is G-protein coupled receptor moody (Drosophila pseudoobscura pseudoobscura (Fruit fly)).